The chain runs to 834 residues: DNA polymerase I, thermostable (834 aa).

Residues R176–Q262 enclose the 5'-3' exonuclease domain. Residues E412–G834 form a polymerase region.

It belongs to the DNA polymerase type-A family.

The enzyme catalyses DNA(n) + a 2'-deoxyribonucleoside 5'-triphosphate = DNA(n+1) + diphosphate. In addition to polymerase activity, this DNA polymerase exhibits 5'-3' exonuclease activity. The polypeptide is DNA polymerase I, thermostable (polA) (Thermus thermophilus (strain ATCC 27634 / DSM 579 / HB8)).